A 146-amino-acid chain; its full sequence is D-aminoacyl-tRNA deacylase (146 aa).

A Gly-cisPro motif, important for rejection of L-amino acids motif is present at residues Gly137–Pro138.

It belongs to the DTD family. In terms of assembly, homodimer.

Its subcellular location is the cytoplasm. The enzyme catalyses glycyl-tRNA(Ala) + H2O = tRNA(Ala) + glycine + H(+). It catalyses the reaction a D-aminoacyl-tRNA + H2O = a tRNA + a D-alpha-amino acid + H(+). An aminoacyl-tRNA editing enzyme that deacylates mischarged D-aminoacyl-tRNAs. Also deacylates mischarged glycyl-tRNA(Ala), protecting cells against glycine mischarging by AlaRS. Acts via tRNA-based rather than protein-based catalysis; rejects L-amino acids rather than detecting D-amino acids in the active site. By recycling D-aminoacyl-tRNA to D-amino acids and free tRNA molecules, this enzyme counteracts the toxicity associated with the formation of D-aminoacyl-tRNA entities in vivo and helps enforce protein L-homochirality. The chain is D-aminoacyl-tRNA deacylase from Variovorax paradoxus (strain S110).